Here is a 412-residue protein sequence, read N- to C-terminus: Putative competence-damage inducible protein (412 aa).

It belongs to the CinA family.

This chain is Putative competence-damage inducible protein, found in Clostridium perfringens (strain 13 / Type A).